Reading from the N-terminus, the 302-residue chain is Recombination-associated protein RdgC (302 aa).

It belongs to the RdgC family.

Its subcellular location is the cytoplasm. The protein resides in the nucleoid. May be involved in recombination. The polypeptide is Recombination-associated protein RdgC (Haemophilus influenzae (strain PittGG)).